A 502-amino-acid chain; its full sequence is Probable malate:quinone oxidoreductase 1 (502 aa).

This sequence belongs to the MQO family. FAD serves as cofactor.

The catalysed reaction is (S)-malate + a quinone = a quinol + oxaloacetate. It functions in the pathway carbohydrate metabolism; tricarboxylic acid cycle; oxaloacetate from (S)-malate (quinone route): step 1/1. The sequence is that of Probable malate:quinone oxidoreductase 1 from Pseudomonas putida (strain ATCC 47054 / DSM 6125 / CFBP 8728 / NCIMB 11950 / KT2440).